Consider the following 258-residue polypeptide: Imidazole glycerol phosphate synthase subunit HisF (258 aa).

Active-site residues include D11 and D130.

This sequence belongs to the HisA/HisF family. As to quaternary structure, heterodimer of HisH and HisF.

It localises to the cytoplasm. The enzyme catalyses 5-[(5-phospho-1-deoxy-D-ribulos-1-ylimino)methylamino]-1-(5-phospho-beta-D-ribosyl)imidazole-4-carboxamide + L-glutamine = D-erythro-1-(imidazol-4-yl)glycerol 3-phosphate + 5-amino-1-(5-phospho-beta-D-ribosyl)imidazole-4-carboxamide + L-glutamate + H(+). It functions in the pathway amino-acid biosynthesis; L-histidine biosynthesis; L-histidine from 5-phospho-alpha-D-ribose 1-diphosphate: step 5/9. Its function is as follows. IGPS catalyzes the conversion of PRFAR and glutamine to IGP, AICAR and glutamate. The HisF subunit catalyzes the cyclization activity that produces IGP and AICAR from PRFAR using the ammonia provided by the HisH subunit. In Enterobacter sp. (strain 638), this protein is Imidazole glycerol phosphate synthase subunit HisF.